We begin with the raw amino-acid sequence, 92 residues long: Probable Fe(2+)-trafficking protein (92 aa).

Belongs to the Fe(2+)-trafficking protein family.

Its function is as follows. Could be a mediator in iron transactions between iron acquisition and iron-requiring processes, such as synthesis and/or repair of Fe-S clusters in biosynthetic enzymes. This chain is Probable Fe(2+)-trafficking protein, found in Shewanella woodyi (strain ATCC 51908 / MS32).